Reading from the N-terminus, the 128-residue chain is uncharacterized protein (128 aa).

3 helical membrane passes run 30–50 (ILFT…LGSS), 65–85 (VFRG…LGIQ), and 93–113 (WEVA…PDIV).

Its subcellular location is the cell membrane. This is an uncharacterized protein from Rickettsia prowazekii (strain Madrid E).